Here is a 396-residue protein sequence, read N- to C-terminus: NADH-quinone oxidoreductase subunit D (396 aa).

Belongs to the complex I 49 kDa subunit family. NDH-1 is composed of 14 different subunits. Subunits NuoB, C, D, E, F, and G constitute the peripheral sector of the complex.

It is found in the cell inner membrane. The catalysed reaction is a quinone + NADH + 5 H(+)(in) = a quinol + NAD(+) + 4 H(+)(out). In terms of biological role, NDH-1 shuttles electrons from NADH, via FMN and iron-sulfur (Fe-S) centers, to quinones in the respiratory chain. The immediate electron acceptor for the enzyme in this species is believed to be ubiquinone. Couples the redox reaction to proton translocation (for every two electrons transferred, four hydrogen ions are translocated across the cytoplasmic membrane), and thus conserves the redox energy in a proton gradient. The sequence is that of NADH-quinone oxidoreductase subunit D from Brucella canis (strain ATCC 23365 / NCTC 10854 / RM-666).